The primary structure comprises 89 residues: Small ribosomal subunit protein uS15 (89 aa).

The protein belongs to the universal ribosomal protein uS15 family. As to quaternary structure, part of the 30S ribosomal subunit. Forms a bridge to the 50S subunit in the 70S ribosome, contacting the 23S rRNA.

One of the primary rRNA binding proteins, it binds directly to 16S rRNA where it helps nucleate assembly of the platform of the 30S subunit by binding and bridging several RNA helices of the 16S rRNA. In terms of biological role, forms an intersubunit bridge (bridge B4) with the 23S rRNA of the 50S subunit in the ribosome. In Aliivibrio fischeri (strain ATCC 700601 / ES114) (Vibrio fischeri), this protein is Small ribosomal subunit protein uS15.